We begin with the raw amino-acid sequence, 116 residues long: Iron-sulfur cluster insertion protein ErpA (116 aa).

The iron-sulfur cluster site is built by cysteine 44, cysteine 108, and cysteine 110.

Belongs to the HesB/IscA family. In terms of assembly, homodimer. Iron-sulfur cluster is required as a cofactor.

Functionally, required for insertion of 4Fe-4S clusters for at least IspG. The protein is Iron-sulfur cluster insertion protein ErpA of Pseudomonas entomophila (strain L48).